Here is a 99-residue protein sequence, read N- to C-terminus: Large ribosomal subunit protein bL28 (99 aa).

Belongs to the bacterial ribosomal protein bL28 family.

The chain is Large ribosomal subunit protein bL28 from Brucella anthropi (strain ATCC 49188 / DSM 6882 / CCUG 24695 / JCM 21032 / LMG 3331 / NBRC 15819 / NCTC 12168 / Alc 37) (Ochrobactrum anthropi).